The primary structure comprises 201 residues: Recombination protein RecR (201 aa).

A C4-type zinc finger spans residues 60-75 (CTSCGNVDTSDPCTIC). Residues 83-178 (TTLVVVEDVS…KVTRLAHGVP (96 aa)) form the Toprim domain.

Belongs to the RecR family.

May play a role in DNA repair. It seems to be involved in an RecBC-independent recombinational process of DNA repair. It may act with RecF and RecO. This Methylobacterium radiotolerans (strain ATCC 27329 / DSM 1819 / JCM 2831 / NBRC 15690 / NCIMB 10815 / 0-1) protein is Recombination protein RecR.